We begin with the raw amino-acid sequence, 373 residues long: Dual-specificity RNA methyltransferase RlmN (373 aa).

Glu-94 serves as the catalytic Proton acceptor. Residues Glu-100 to Asp-339 enclose the Radical SAM core domain. The cysteines at positions 107 and 344 are disulfide-linked. Residues Cys-114, Cys-118, and Cys-121 each coordinate [4Fe-4S] cluster. S-adenosyl-L-methionine is bound by residues Gly-168 to Glu-169, Ser-200, Ser-222 to His-224, and Asn-301. The active-site S-methylcysteine intermediate is the Cys-344.

It belongs to the radical SAM superfamily. RlmN family. The cofactor is [4Fe-4S] cluster.

It localises to the cytoplasm. It catalyses the reaction adenosine(2503) in 23S rRNA + 2 reduced [2Fe-2S]-[ferredoxin] + 2 S-adenosyl-L-methionine = 2-methyladenosine(2503) in 23S rRNA + 5'-deoxyadenosine + L-methionine + 2 oxidized [2Fe-2S]-[ferredoxin] + S-adenosyl-L-homocysteine. The enzyme catalyses adenosine(37) in tRNA + 2 reduced [2Fe-2S]-[ferredoxin] + 2 S-adenosyl-L-methionine = 2-methyladenosine(37) in tRNA + 5'-deoxyadenosine + L-methionine + 2 oxidized [2Fe-2S]-[ferredoxin] + S-adenosyl-L-homocysteine. Functionally, specifically methylates position 2 of adenine 2503 in 23S rRNA and position 2 of adenine 37 in tRNAs. m2A2503 modification seems to play a crucial role in the proofreading step occurring at the peptidyl transferase center and thus would serve to optimize ribosomal fidelity. In Shewanella baltica (strain OS185), this protein is Dual-specificity RNA methyltransferase RlmN.